The sequence spans 339 residues: Uroporphyrinogen decarboxylase (339 aa).

Substrate-binding positions include 23 to 27 (RQAGR), Asp72, Tyr147, Thr202, and His315.

The protein belongs to the uroporphyrinogen decarboxylase family. As to quaternary structure, homodimer.

It localises to the cytoplasm. It carries out the reaction uroporphyrinogen III + 4 H(+) = coproporphyrinogen III + 4 CO2. The protein operates within porphyrin-containing compound metabolism; protoporphyrin-IX biosynthesis; coproporphyrinogen-III from 5-aminolevulinate: step 4/4. Functionally, catalyzes the decarboxylation of four acetate groups of uroporphyrinogen-III to yield coproporphyrinogen-III. The polypeptide is Uroporphyrinogen decarboxylase (Geotalea daltonii (strain DSM 22248 / JCM 15807 / FRC-32) (Geobacter daltonii)).